The chain runs to 304 residues: Ribosomal RNA small subunit methyltransferase H (304 aa).

S-adenosyl-L-methionine is bound by residues 36 to 38 (CGH), Asp55, Phe81, Asp102, and Gln109.

This sequence belongs to the methyltransferase superfamily. RsmH family.

It localises to the cytoplasm. The enzyme catalyses cytidine(1402) in 16S rRNA + S-adenosyl-L-methionine = N(4)-methylcytidine(1402) in 16S rRNA + S-adenosyl-L-homocysteine + H(+). In terms of biological role, specifically methylates the N4 position of cytidine in position 1402 (C1402) of 16S rRNA. The polypeptide is Ribosomal RNA small subunit methyltransferase H (Onion yellows phytoplasma (strain OY-M)).